Here is a 32-residue protein sequence, read N- to C-terminus: Delta-conotoxin-like CnVIB (32 aa).

Intrachain disulfides connect cysteine 3-cysteine 18, cysteine 10-cysteine 22, and cysteine 17-cysteine 27. A 4-hydroxyproline mark is found at proline 6 and proline 14.

Belongs to the conotoxin O1 superfamily. As to expression, expressed by the venom duct.

Its subcellular location is the secreted. Its function is as follows. Delta-conotoxins bind to site 6 of voltage-gated sodium channels (Nav) and inhibit the inactivation process. This toxin acts on Nav1.4/SCN4A and Nav1.6/SCN8A (EC(50)=2.3 uM). This chain is Delta-conotoxin-like CnVIB, found in Conus consors (Singed cone).